We begin with the raw amino-acid sequence, 189 residues long: HGPRTase-like protein 2 (189 aa).

Belongs to the purine/pyrimidine phosphoribosyltransferase family. Archaeal HPRT subfamily.

Functionally, may catalyze a purine salvage reaction, the substrate is unknown. This Halalkalicoccus jeotgali (strain DSM 18796 / CECT 7217 / JCM 14584 / KCTC 4019 / B3) protein is HGPRTase-like protein 2.